We begin with the raw amino-acid sequence, 528 residues long: D-3-phosphoglycerate dehydrogenase (528 aa).

Residues 151–152 (RI), aspartate 171, 230–232 (AAR), and aspartate 256 contribute to the NAD(+) site. Arginine 232 is an active-site residue. The active site involves glutamate 261. The active-site Proton donor is histidine 279. NAD(+) is bound at residue 279–282 (HLGA). The ACT domain maps to 455–527 (NLIIHYVDRP…DAYKLEVVDL (73 aa)).

Belongs to the D-isomer specific 2-hydroxyacid dehydrogenase family.

It catalyses the reaction (2R)-3-phosphoglycerate + NAD(+) = 3-phosphooxypyruvate + NADH + H(+). The catalysed reaction is (R)-2-hydroxyglutarate + NAD(+) = 2-oxoglutarate + NADH + H(+). It functions in the pathway amino-acid biosynthesis; L-serine biosynthesis; L-serine from 3-phospho-D-glycerate: step 1/3. Catalyzes the reversible oxidation of 3-phospho-D-glycerate to 3-phosphonooxypyruvate, the first step of the phosphorylated L-serine biosynthesis pathway. Also catalyzes the reversible oxidation of 2-hydroxyglutarate to 2-oxoglutarate. The sequence is that of D-3-phosphoglycerate dehydrogenase (serA) from Mycobacterium bovis (strain ATCC BAA-935 / AF2122/97).